The chain runs to 159 residues: SsrA-binding protein (159 aa).

It belongs to the SmpB family.

Its subcellular location is the cytoplasm. Required for rescue of stalled ribosomes mediated by trans-translation. Binds to transfer-messenger RNA (tmRNA), required for stable association of tmRNA with ribosomes. tmRNA and SmpB together mimic tRNA shape, replacing the anticodon stem-loop with SmpB. tmRNA is encoded by the ssrA gene; the 2 termini fold to resemble tRNA(Ala) and it encodes a 'tag peptide', a short internal open reading frame. During trans-translation Ala-aminoacylated tmRNA acts like a tRNA, entering the A-site of stalled ribosomes, displacing the stalled mRNA. The ribosome then switches to translate the ORF on the tmRNA; the nascent peptide is terminated with the 'tag peptide' encoded by the tmRNA and targeted for degradation. The ribosome is freed to recommence translation, which seems to be the essential function of trans-translation. In Mycobacteroides abscessus (strain ATCC 19977 / DSM 44196 / CCUG 20993 / CIP 104536 / JCM 13569 / NCTC 13031 / TMC 1543 / L948) (Mycobacterium abscessus), this protein is SsrA-binding protein.